The primary structure comprises 532 residues: Bifunctional purine biosynthesis protein PurH (532 aa).

The region spanning 1 to 147 (MADRPIRQAL…KNHKDVAIVV (147 aa)) is the MGS-like domain.

Belongs to the PurH family.

It carries out the reaction (6R)-10-formyltetrahydrofolate + 5-amino-1-(5-phospho-beta-D-ribosyl)imidazole-4-carboxamide = 5-formamido-1-(5-phospho-D-ribosyl)imidazole-4-carboxamide + (6S)-5,6,7,8-tetrahydrofolate. The catalysed reaction is IMP + H2O = 5-formamido-1-(5-phospho-D-ribosyl)imidazole-4-carboxamide. The protein operates within purine metabolism; IMP biosynthesis via de novo pathway; 5-formamido-1-(5-phospho-D-ribosyl)imidazole-4-carboxamide from 5-amino-1-(5-phospho-D-ribosyl)imidazole-4-carboxamide (10-formyl THF route): step 1/1. Its pathway is purine metabolism; IMP biosynthesis via de novo pathway; IMP from 5-formamido-1-(5-phospho-D-ribosyl)imidazole-4-carboxamide: step 1/1. This Haemophilus influenzae (strain ATCC 51907 / DSM 11121 / KW20 / Rd) protein is Bifunctional purine biosynthesis protein PurH.